The following is a 586-amino-acid chain: Phosphomethylpyrimidine synthase (586 aa).

Residues 1–58 (MKQSVSAEQIELKSSLPGSKKVYVDGPREGMKVPMREIEQSDTNGVPNPPIRVYDTSG) form a disordered region. The segment covering 22 to 39 (VYVDGPREGMKVPMREIE) has biased composition (basic and acidic residues). Residues N193, M222, Y251, H287, 307 to 309 (SRG), 348 to 351 (DGLR), and E387 contribute to the substrate site. A Zn(2+)-binding site is contributed by H391. Y414 contacts substrate. H455 serves as a coordination point for Zn(2+). The [4Fe-4S] cluster site is built by C535, C538, and C543.

It belongs to the ThiC family. The cofactor is [4Fe-4S] cluster.

The enzyme catalyses 5-amino-1-(5-phospho-beta-D-ribosyl)imidazole + S-adenosyl-L-methionine = 4-amino-2-methyl-5-(phosphooxymethyl)pyrimidine + CO + 5'-deoxyadenosine + formate + L-methionine + 3 H(+). It functions in the pathway cofactor biosynthesis; thiamine diphosphate biosynthesis. In terms of biological role, catalyzes the synthesis of the hydroxymethylpyrimidine phosphate (HMP-P) moiety of thiamine from aminoimidazole ribotide (AIR) in a radical S-adenosyl-L-methionine (SAM)-dependent reaction. In Bacillus thuringiensis (strain Al Hakam), this protein is Phosphomethylpyrimidine synthase.